The chain runs to 607 residues: Albumin (607 aa).

The N-terminal stretch at 1-18 (MKWVTFISLLLLFSSAYS) is a signal peptide. Positions 19 to 24 (RGVFRR) are excised as a propeptide. 3 consecutive Albumin domains span residues 19-209 (RGVF…DAMR), 210-402 (EKVL…KLKH), and 403-600 (LVDE…KLVA). Residue His27 coordinates Cu cation. Ser29 carries the phosphoserine modification. Residues Glu30 and Asp37 each contribute to the Ca(2+) site. A disulfide bond links Cys77 and Cys86. Phosphoserine occurs at positions 82 and 89. Residue His91 participates in Zn(2+) binding. Disulfide bonds link Cys99/Cys115, Cys114/Cys125, Cys147/Cys192, Cys191/Cys200, Cys223/Cys269, and Cys268/Cys276. Thr107 carries the phosphothreonine modification. At Lys228 the chain carries N6-succinyllysine. Residue Glu267 coordinates Ca(2+). Residues His270 and Asp272 each contribute to the Zn(2+) site. The Ca(2+) site is built by Asp272, Glu275, Asp278, and Asp282. Intrachain disulfides connect Cys288/Cys302, Cys301/Cys312, Cys339/Cys384, Cys383/Cys392, Cys415/Cys461, Cys460/Cys471, Cys484/Cys500, and Cys499/Cys510. Phosphoserine is present on Ser296. The residue at position 442 (Ser442) is a Phosphoserine. Residues Thr443 and Thr445 each carry the phosphothreonine modification. Lys459 carries the N6-succinyllysine modification. The residue at position 512 (Ser512) is a Phosphoserine. 2 disulfide bridges follow: Cys537/Cys582 and Cys581/Cys590. Residue Lys557 is modified to N6-methyllysine. A Phosphothreonine modification is found at Thr569. N6-succinyllysine is present on Lys587.

It belongs to the ALB/AFP/VDB family. In terms of assembly, interacts with FCGRT; this interaction regulates ALB homeostasis. Interacts with TASOR. In plasma, occurs in a covalently-linked complex with chromophore-bound alpha-1-microglobulin; this interaction does not prevent fatty acid binding to ALB. Phosphorylated by FAM20C in the extracellular medium. As to expression, plasma.

The protein resides in the secreted. Functionally, binds water, Ca(2+), Na(+), K(+), fatty acids, hormones, bilirubin and drugs. Its main function is the regulation of the colloidal osmotic pressure of blood. Major zinc transporter in plasma, typically binds about 80% of all plasma zinc. Major calcium and magnesium transporter in plasma, binds approximately 45% of circulating calcium and magnesium in plasma. Potentially has more than two calcium-binding sites and might additionally bind calcium in a non-specific manner. The shared binding site between zinc and calcium at residue Asp-272 suggests a crosstalk between zinc and calcium transport in the blood. The rank order of affinity is zinc &gt; calcium &gt; magnesium. Binds to the bacterial siderophore enterobactin and inhibits enterobactin-mediated iron uptake of E.coli from ferric transferrin, and may thereby limit the utilization of iron and growth of enteric bacteria such as E.coli. Does not prevent iron uptake by the bacterial siderophore aerobactin. In Ovis aries (Sheep), this protein is Albumin (ALB).